The primary structure comprises 802 residues: Chromosome alignment-maintaining phosphoprotein 1 (802 aa).

Met1 carries the post-translational modification N-acetylmethionine. Residues 88–105 (SDKWSEQPKEQPSKDTES) show a composition bias toward basic and acidic residues. The interval 88 to 475 (SDKWSEQPKE…PDLWKSSFIM (388 aa)) is disordered. Ser108 is modified (phosphoserine). Polar residues predominate over residues 135 to 148 (QKTSPSLCPESQAS). The segment covering 185 to 203 (ERVDPPCELPELEKPERGP) has biased composition (basic and acidic residues). Phosphoserine is present on residues Ser204, Ser207, Ser234, Ser237, Ser243, Ser252, Ser254, Ser265, Ser272, Ser276, Ser298, Ser309, Ser334, Ser345, and Ser365. The segment at 261–479 (ARTASPEPRK…KSSFIMESQK (219 aa)) is mediates interaction with MAD2L2. Residues 332–351 (PMSPGPWKPIPSVSPGPWKP) are compositionally biased toward pro residues. Residues 354-368 (SMSTASWKSSVSSGS) show a composition bias toward low complexity. Residues 369-378 (WKTPPTSPES) show a composition bias toward polar residues. A Phosphothreonine modification is found at Thr371. Ser375, Ser394, Ser405, Ser416, Ser421, Ser425, Ser432, Ser434, and Ser441 each carry phosphoserine. Residues 440–580 (VSPDQRKTSP…EIQLEAVDNA (141 aa)) form a mediates localization to the spindle and the kinetochore and is required for the attachment of spindle microtubules to the kinetochore region. At Thr447 the chain carries Phosphothreonine. Ser448, Ser451, and Ser461 each carry phosphoserine. Lys479 bears the N6-acetyllysine; alternate mark. Lys479 participates in a covalent cross-link: Glycyl lysine isopeptide (Lys-Gly) (interchain with G-Cter in SUMO2); alternate. Phosphoserine occurs at positions 497, 502, and 532. Lys555 participates in a covalent cross-link: Glycyl lysine isopeptide (Lys-Gly) (interchain with G-Cter in SUMO2). The interval 581–802 (KCDSLAQEGL…LESPLEEQQI (222 aa)) is mediates localization to the chromosome and the spindle and negatively regulates chromosome alignment. Thr593 carries the post-translational modification Phosphothreonine. Lys596 participates in a covalent cross-link: Glycyl lysine isopeptide (Lys-Gly) (interchain with G-Cter in SUMO2). A phosphoserine mark is found at Ser603, Ser605, Ser617, Ser622, Ser641, Ser642, and Ser643. Positions 603-625 (SPSSKKLKKDSQENSDAELSSSE) are disordered. Lys660 is covalently cross-linked (Glycyl lysine isopeptide (Lys-Gly) (interchain with G-Cter in SUMO2)). At Ser665 the chain carries Phosphoserine. A Glycyl lysine isopeptide (Lys-Gly) (interchain with G-Cter in SUMO2) cross-link involves residue Lys679. Phosphoserine is present on Ser726. The C2H2-type zinc finger occupies 728–750 (YKCTICGKAFLLESLLKNHVAAH).

Interacts with MAD2L2. Interacts with POGZ, CBX1, CBX3 and CBX5. Phosphorylated by CDK1. Mitotic phosphorylation is required for the attachment of spindle microtubules to the kinetochore.

Its subcellular location is the nucleus. It is found in the chromosome. It localises to the centromere. The protein localises to the kinetochore. The protein resides in the cytoplasm. Its subcellular location is the cytoskeleton. It is found in the spindle. Functionally, required for proper alignment of chromosomes at metaphase and their accurate segregation during mitosis. Involved in the maintenance of spindle microtubules attachment to the kinetochore during sister chromatid biorientation. May recruit CENPE and CENPF to the kinetochore. This chain is Chromosome alignment-maintaining phosphoprotein 1 (Champ1), found in Mus musculus (Mouse).